The sequence spans 788 residues: Cadherin-10 (788 aa).

Residues 1–22 form the signal peptide; the sequence is MTIYQFLRLFVLWACLPHFCCP. A propeptide spanning residues 23–54 is cleaved from the precursor; that stretch reads ELTFRRTPGIQQMTAESRAPRSDGKILHRQKR. Residues 23–613 are Extracellular-facing; it reads ELTFRRTPGI…LLPAGLSTGA (591 aa). Cadherin domains are found at residues 56–160, 161–269, 270–384, 385–489, and 489–603; these read WMWN…EPTF, PEEI…PPRF, PQNT…PPVF, SRSS…APQF, and FAVF…AEAL. Asparagine 256 is a glycosylation site (N-linked (GlcNAc...) asparagine). N-linked (GlcNAc...) asparagine glycosylation is found at asparagine 456 and asparagine 534. Residues 614-634 traverse the membrane as a helical segment; it reads LIAILLCIIILLVIVVLFAAL. The Cytoplasmic segment spans residues 635-788; the sequence is KRQRKKEPLI…YGGGESDKDA (154 aa). Serine 784 carries the phosphoserine modification.

It localises to the cell membrane. In terms of biological role, cadherins are calcium-dependent cell adhesion proteins. They preferentially interact with themselves in a homophilic manner in connecting cells; cadherins may thus contribute to the sorting of heterogeneous cell types. The protein is Cadherin-10 (Cdh10) of Mus musculus (Mouse).